Here is a 128-residue protein sequence, read N- to C-terminus: Azurin (128 aa).

The 128-residue stretch at 1-128 (AECKVTVDST…SMMKGTVTLK (128 aa)) folds into the Plastocyanin-like domain. A disulfide bridge connects residues cysteine 3 and cysteine 26. Residues histidine 46, cysteine 112, histidine 117, and methionine 121 each contribute to the Cu cation site.

It localises to the periplasm. Transfers electrons from cytochrome c551 to cytochrome oxidase. This is Azurin from Pseudomonas putida (Arthrobacter siderocapsulatus).